The sequence spans 247 residues: Carboxy-S-adenosyl-L-methionine synthase (247 aa).

S-adenosyl-L-methionine is bound by residues tyrosine 40, glycine 65–serine 67, aspartate 90–asparagine 91, aspartate 122–isoleucine 123, asparagine 137, and arginine 204.

It belongs to the class I-like SAM-binding methyltransferase superfamily. Cx-SAM synthase family. As to quaternary structure, homodimer.

It catalyses the reaction prephenate + S-adenosyl-L-methionine = carboxy-S-adenosyl-L-methionine + 3-phenylpyruvate + H2O. Its function is as follows. Catalyzes the conversion of S-adenosyl-L-methionine (SAM) to carboxy-S-adenosyl-L-methionine (Cx-SAM). In Pseudomonas fluorescens (strain ATCC BAA-477 / NRRL B-23932 / Pf-5), this protein is Carboxy-S-adenosyl-L-methionine synthase.